A 933-amino-acid polypeptide reads, in one-letter code: Valine--tRNA ligase (933 aa).

Residues 58-68 carry the 'HIGH' region motif; the sequence is PNVTGSLHMGH. Residues 556-560 carry the 'KMSKS' region motif; sequence KMSKS. K559 is a binding site for ATP. 2 coiled-coil regions span residues 807–833 and 864–933; these read VTKN…ANKV and EGLV…LGLK.

The protein belongs to the class-I aminoacyl-tRNA synthetase family. ValS type 1 subfamily. Monomer.

The protein localises to the cytoplasm. The enzyme catalyses tRNA(Val) + L-valine + ATP = L-valyl-tRNA(Val) + AMP + diphosphate. Its function is as follows. Catalyzes the attachment of valine to tRNA(Val). As ValRS can inadvertently accommodate and process structurally similar amino acids such as threonine, to avoid such errors, it has a 'posttransfer' editing activity that hydrolyzes mischarged Thr-tRNA(Val) in a tRNA-dependent manner. This is Valine--tRNA ligase from Prochlorococcus marinus (strain SARG / CCMP1375 / SS120).